We begin with the raw amino-acid sequence, 719 residues long: MSDISVEKLTELEAAAELERLARAIAHHDELYHAKDRPEISDAAYDALKRRNEAIEAHFPALVRDDSPSRRVGAAPALATFAPVVHARPMLSLDNAFSDEDVRDFVGSVYRFLGQLPDDSIAFTAEPKIDGLSMSIRYENGILVSGATRGDGTTGENVTANIRTIAEIPNRLPAGAPAVVEVRGEVYMAKSDFLTLNAQMEAEGKQTYVNPRNTAAGSLRQLDAKVTASRKLRFFAYAWGEMSDMPVDTQLGMVEVFRQWGFPVNPLMKRFNSVDGLLAHYRAIGMERPTLDYDIDGVVYKVDRLDLQTRLGFRSRSPRWAIAHKFPAEQALTILRGIDIQVGRTGALTPVARLEPITVGGVVVTNATLHNEDYIKGIGQKGEPIREGRDIRIGDSVIVQRAGDVIPQIVDVVLEEGKKRGEPYQFPHVCPACGSHAVREEGEAVRRCTGGLICPAQAVERIRHFVSRNAFDIEGLGEKQVEFFFNAEDPALCIRSPADIFTLKKRQENSLTKLQNIEGFGATSVKKLYDAIDARREIALHRFLFGLGIRHVGEVNAKRLARAYLSYAAFEKAALEAVPPKEGDRTDKGSEAWQDMLAVEGIGSIVAEAVVDFYGEPHNREVLAALLAEVTPLDEEARVATGSPVEGKTVVFTGSLERMSRDEAKAMAERHGAKTAGSVSKKTDLVVAGPGAGSKLAKATELGIEVINEDDWFKLVGED.

Residues 42-46 (DAAYD), 92-93 (SL), and E126 each bind NAD(+). K128 functions as the N6-AMP-lysine intermediate in the catalytic mechanism. NAD(+) contacts are provided by R149, E185, K301, and K325. C430, C433, C448, and C454 together coordinate Zn(2+). Residues 640–719 (ATGSPVEGKT…DDWFKLVGED (80 aa)) form the BRCT domain.

It belongs to the NAD-dependent DNA ligase family. LigA subfamily. Mg(2+) serves as cofactor. Requires Mn(2+) as cofactor.

It carries out the reaction NAD(+) + (deoxyribonucleotide)n-3'-hydroxyl + 5'-phospho-(deoxyribonucleotide)m = (deoxyribonucleotide)n+m + AMP + beta-nicotinamide D-nucleotide.. Functionally, DNA ligase that catalyzes the formation of phosphodiester linkages between 5'-phosphoryl and 3'-hydroxyl groups in double-stranded DNA using NAD as a coenzyme and as the energy source for the reaction. It is essential for DNA replication and repair of damaged DNA. In Brucella ovis (strain ATCC 25840 / 63/290 / NCTC 10512), this protein is DNA ligase.